We begin with the raw amino-acid sequence, 129 residues long: Follitropin subunit beta (129 aa).

Positions 1–18 (MKSVQFCFLFCCWRVICC) are cleaved as a signal peptide. 6 cysteine pairs are disulfide-bonded: cysteine 21/cysteine 69, cysteine 35/cysteine 84, cysteine 38/cysteine 122, cysteine 46/cysteine 100, cysteine 50/cysteine 102, and cysteine 105/cysteine 112. Residues asparagine 25 and asparagine 42 are each glycosylated (N-linked (GlcNAc...) asparagine).

The protein belongs to the glycoprotein hormones subunit beta family. In terms of assembly, heterodimer. The active follitropin is a heterodimer composed of an alpha chain/CGA shared with other hormones and a unique beta chain/FSHB shown here.

Its subcellular location is the secreted. Functionally, together with the alpha chain CGA constitutes follitropin, the follicle-stimulating hormone, and provides its biological specificity to the hormone heterodimer. Binds FSHR, a G protein-coupled receptor, on target cells to activate downstream signaling pathways. Follitropin is involved in follicle development and spermatogenesis in reproductive organs. In Panthera tigris altaica (Siberian tiger), this protein is Follitropin subunit beta (FSHB).